The chain runs to 289 residues: ATP synthase gamma chain (289 aa).

The protein belongs to the ATPase gamma chain family. As to quaternary structure, F-type ATPases have 2 components, CF(1) - the catalytic core - and CF(0) - the membrane proton channel. CF(1) has five subunits: alpha(3), beta(3), gamma(1), delta(1), epsilon(1). CF(0) has three main subunits: a, b and c.

It localises to the cell inner membrane. Functionally, produces ATP from ADP in the presence of a proton gradient across the membrane. The gamma chain is believed to be important in regulating ATPase activity and the flow of protons through the CF(0) complex. This is ATP synthase gamma chain from Coxiella burnetii (strain CbuK_Q154) (Coxiella burnetii (strain Q154)).